A 286-amino-acid polypeptide reads, in one-letter code: MSIDFTPDPQLYPFESRWFDSSRGRIHYVDEGTGPPILLCHGNPTWSFLYRDIIVALRDRFRCVAPDYLGFGLSERPSGFGYQIDEHARVIGEFVDHLGLDRYLSMGQDWGGPISMAVAVERADRVRGVVLGNTWFWPADTLAMKAFSRVMSSPPVQYAILRRNFFVERLIPAGTEHRPSSAVMAHYRAVQPNAAARRGVAEMPKQILAARPLLARLAREVPATLGTKPTLLIWGMKDVAFRPKTIIPRLSATFPDHVLVELPNAKHFIQEDAPDRIAAAIIERFG.

In terms of domain architecture, AB hydrolase-1 spans 35–134 (PPILLCHGNP…RVRGVVLGNT (100 aa)). Residue Asp-109 is the Nucleophile of the active site. Asp-238 serves as the catalytic Proton donor. His-267 functions as the Proton acceptor in the catalytic mechanism.

Belongs to the haloalkane dehalogenase family. Type 1 subfamily. In terms of assembly, monomer.

It carries out the reaction 1-haloalkane + H2O = a halide anion + a primary alcohol + H(+). Its function is as follows. Catalyzes hydrolytic cleavage of carbon-halogen bonds in halogenated aliphatic compounds, leading to the formation of the corresponding primary alcohols, halide ions and protons. This chain is Haloalkane dehalogenase 2 (dhmA2), found in Mycobacterium bovis (strain ATCC BAA-935 / AF2122/97).